The sequence spans 441 residues: Glutamyl-tRNA reductase (441 aa).

Substrate is bound by residues 47–50 (TCNR), Ser-110, 115–117 (ERE), and Gln-121. Residue Cys-48 is the Nucleophile of the active site. 192 to 197 (GTGAYA) serves as a coordination point for NADP(+).

It belongs to the glutamyl-tRNA reductase family. As to quaternary structure, homodimer.

The catalysed reaction is (S)-4-amino-5-oxopentanoate + tRNA(Glu) + NADP(+) = L-glutamyl-tRNA(Glu) + NADPH + H(+). Its pathway is porphyrin-containing compound metabolism; protoporphyrin-IX biosynthesis; 5-aminolevulinate from L-glutamyl-tRNA(Glu): step 1/2. In terms of biological role, catalyzes the NADPH-dependent reduction of glutamyl-tRNA(Glu) to glutamate 1-semialdehyde (GSA). This Pseudarthrobacter chlorophenolicus (strain ATCC 700700 / DSM 12829 / CIP 107037 / JCM 12360 / KCTC 9906 / NCIMB 13794 / A6) (Arthrobacter chlorophenolicus) protein is Glutamyl-tRNA reductase.